The primary structure comprises 136 residues: Piercer of microtubule wall 1 protein (136 aa).

Residues 1-24 (MAEECPRACAEPVAPKATAPPERT) form a disordered region.

Belongs to the PIERCE1 family. As to quaternary structure, microtubule inner protein component of sperm flagellar doublet microtubules. Interacts with CFAP53, ODAD1 and ODAD3; the interactions link the outer dynein arms docking complex (ODA-DC) to the internal microtubule inner proteins (MIP) in cilium axoneme. In terms of tissue distribution, expressed in airway epithelial cells.

It is found in the cytoplasm. Its subcellular location is the cytoskeleton. It localises to the cilium axoneme. The protein resides in the flagellum axoneme. Functionally, microtubule inner protein involved in the attachment of outer dynein arms (ODAs) to dynein-decorated doublet microtubules (DMTs) in cilia axoneme, which is required for motile cilia beating. Functions at the initial step of left-right asymmetry specification of the visceral organs. The sequence is that of Piercer of microtubule wall 1 protein from Homo sapiens (Human).